The following is a 585-amino-acid chain: uncharacterized protein (585 aa).

Polar residues predominate over residues 1 to 18; it reads MSALSTKLEPTNSYSESL. The disordered stretch occupies residues 1–23; sequence MSALSTKLEPTNSYSESLPPQRR.

Belongs to the protein kinase superfamily. ADCK protein kinase family.

This is an uncharacterized protein from Synechocystis sp. (strain ATCC 27184 / PCC 6803 / Kazusa).